The chain runs to 343 residues: Protease HtpX homolog (343 aa).

2 helical membrane passes run 7-24 (TMLL…GYLV) and 29-46 (GMVV…FSYW). H130 contributes to the Zn(2+) binding site. The active site involves E131. A Zn(2+)-binding site is contributed by H134. A run of 2 helical transmembrane segments spans residues 145–165 (LTAT…LMGM) and 177–197 (GAGM…AMLV). Position 206 (E206) interacts with Zn(2+). The interval 308-343 (NLEDEDLNPEAQNGFTHNQKKKTVRRGKDRPTWLRH) is disordered. Basic residues predominate over residues 325-335 (NQKKKTVRRGK).

This sequence belongs to the peptidase M48B family. The cofactor is Zn(2+).

It localises to the cell inner membrane. The sequence is that of Protease HtpX homolog from Bartonella bacilliformis (strain ATCC 35685 / KC583 / Herrer 020/F12,63).